A 293-amino-acid chain; its full sequence is Diaminopimelate epimerase (293 aa).

The substrate site is built by Asn-11 and Asn-78. Cys-87 (proton donor) is an active-site residue. Substrate contacts are provided by residues Gly-88 to Asn-89, Asn-166, Asn-202, and Glu-220 to Arg-221. The active-site Proton acceptor is Cys-229. Gly-230–Thr-231 provides a ligand contact to substrate.

This sequence belongs to the diaminopimelate epimerase family. In terms of assembly, homodimer.

The protein resides in the cytoplasm. The enzyme catalyses (2S,6S)-2,6-diaminopimelate = meso-2,6-diaminopimelate. It participates in amino-acid biosynthesis; L-lysine biosynthesis via DAP pathway; DL-2,6-diaminopimelate from LL-2,6-diaminopimelate: step 1/1. Its function is as follows. Catalyzes the stereoinversion of LL-2,6-diaminopimelate (L,L-DAP) to meso-diaminopimelate (meso-DAP), a precursor of L-lysine and an essential component of the bacterial peptidoglycan. The sequence is that of Diaminopimelate epimerase from Mycobacterium sp. (strain JLS).